The sequence spans 307 residues: Acetaldehyde dehydrogenase (307 aa).

NAD(+) is bound at residue 12–15; the sequence is SGNI. Catalysis depends on cysteine 127, which acts as the Acyl-thioester intermediate. Residues 158-166 and asparagine 278 each bind NAD(+); that span reads SAGPGTRQN.

The protein belongs to the acetaldehyde dehydrogenase family. Monomer. Can also form a heterotetramer composed of two aldolase (TTHB246) and two dehydrogenase (TTHB247) subunits. Upon complex formation, the aldolase shows a 5-fold increase in substrate affinity, while the dehydrogenase shows a 3-fold decrease; the kcat values of each enzyme are reduced by 2-fold when they are in a complex.

The catalysed reaction is acetaldehyde + NAD(+) + CoA = acetyl-CoA + NADH + H(+). The enzyme catalyses propanal + NAD(+) + CoA = propanoyl-CoA + NADH + H(+). In terms of biological role, catalyzes the conversion of acetaldehyde or propanal to acetyl-CoA or propanoyl-CoA, respectively, using NAD(+) and coenzyme A. The aldehyde substrates can be directly channeled from the aldolase TTHB246 to the dehydrogenase TTHB247. Is the final enzyme in the meta-cleavage pathway for the degradation of aromatic compounds. The polypeptide is Acetaldehyde dehydrogenase (Thermus thermophilus (strain ATCC 27634 / DSM 579 / HB8)).